Reading from the N-terminus, the 197-residue chain is Holliday junction branch migration complex subunit RuvA (197 aa).

The interval 1-65 (MISQVRGTIM…EDAWHLYGFA (65 aa)) is domain I. Residues 66-140 (HAYERAVFQK…DKIDAVGPAP (75 aa)) form a domain II region. The interval 140-144 (PATGT) is flexible linker. Residues 145-197 (APSPLGDDAVRALIALGYNQTEADRAVRAVVESGAPKDVSSLVRGALSRLTAK) are domain III.

This sequence belongs to the RuvA family. Homotetramer. Forms an RuvA(8)-RuvB(12)-Holliday junction (HJ) complex. HJ DNA is sandwiched between 2 RuvA tetramers; dsDNA enters through RuvA and exits via RuvB. An RuvB hexamer assembles on each DNA strand where it exits the tetramer. Each RuvB hexamer is contacted by two RuvA subunits (via domain III) on 2 adjacent RuvB subunits; this complex drives branch migration. In the full resolvosome a probable DNA-RuvA(4)-RuvB(12)-RuvC(2) complex forms which resolves the HJ.

It localises to the cytoplasm. Its function is as follows. The RuvA-RuvB-RuvC complex processes Holliday junction (HJ) DNA during genetic recombination and DNA repair, while the RuvA-RuvB complex plays an important role in the rescue of blocked DNA replication forks via replication fork reversal (RFR). RuvA specifically binds to HJ cruciform DNA, conferring on it an open structure. The RuvB hexamer acts as an ATP-dependent pump, pulling dsDNA into and through the RuvAB complex. HJ branch migration allows RuvC to scan DNA until it finds its consensus sequence, where it cleaves and resolves the cruciform DNA. The polypeptide is Holliday junction branch migration complex subunit RuvA (Gemmatimonas aurantiaca (strain DSM 14586 / JCM 11422 / NBRC 100505 / T-27)).